Consider the following 148-residue polypeptide: Large ribosomal subunit protein uL15 (148 aa).

The span at 1-40 (MADILQMHDLKPAPGANKDRIRVGRGEGSKGKTSGRGDKG) shows a compositional bias: basic and acidic residues. Positions 1 to 47 (MADILQMHDLKPAPGANKDRIRVGRGEGSKGKTSGRGDKGTKKRYQV) are disordered.

It belongs to the universal ribosomal protein uL15 family. As to quaternary structure, part of the 50S ribosomal subunit.

Its function is as follows. Binds to the 23S rRNA. The protein is Large ribosomal subunit protein uL15 of Bifidobacterium adolescentis (strain ATCC 15703 / DSM 20083 / NCTC 11814 / E194a).